The following is a 253-amino-acid chain: Tetraspanin-11 (253 aa).

The next 3 helical transmembrane spans lie at 19–39 (LLFV…AVGI), 63–83 (ILIF…GAIL), and 93–113 (YFCL…LAHV). An N-linked (GlcNAc...) asparagine glycan is attached at Asn127. Residues 220 to 240 (LLLMGAVGIGVACLQICGMVL) form a helical membrane-spanning segment.

Belongs to the tetraspanin (TM4SF) family.

The protein resides in the membrane. The chain is Tetraspanin-11 (TSPAN11) from Homo sapiens (Human).